The sequence spans 220 residues: MNILIFGPPGSGKSTQARRIVERYGLTYISSGDLIRKEIAEGTPLGREMQAYLARGDLIPDTIVNTLIISKLRRVRKDFIMDGYPRTPEQVIALENYLYDHGIKIDVAIDIYVSLEESIRRVSGRRICPKCGAVYHVEFNPPKIPGRCDVCGAELVQREDDRPEVVEKRYRIYMKNMEPIIKFYQKQRIYVKINGHGNIDEVWERIRPLLDYIRNREAMI.

Residue 10–15 coordinates ATP; the sequence is GSGKST. The tract at residues 30–59 is NMP; sequence SSGDLIRKEIAEGTPLGREMQAYLARGDLI. Residues serine 31, arginine 36, 57–59, 83–86, and glutamine 90 each bind AMP; these read DLI and GYPR. The interval 124–161 is LID; it reads GRRICPKCGAVYHVEFNPPKIPGRCDVCGAELVQREDD. Arginine 125 is an ATP binding site. Zn(2+) is bound by residues cysteine 128 and cysteine 131. ATP is bound at residue 134 to 135; it reads VY. Zn(2+)-binding residues include cysteine 148 and cysteine 151. AMP is bound by residues arginine 158 and arginine 169. Glycine 197 contributes to the ATP binding site.

This sequence belongs to the adenylate kinase family. Monomer.

It is found in the cytoplasm. The catalysed reaction is AMP + ATP = 2 ADP. The protein operates within purine metabolism; AMP biosynthesis via salvage pathway; AMP from ADP: step 1/1. Its function is as follows. Catalyzes the reversible transfer of the terminal phosphate group between ATP and AMP. Plays an important role in cellular energy homeostasis and in adenine nucleotide metabolism. The protein is Adenylate kinase of Pyrococcus furiosus (strain ATCC 43587 / DSM 3638 / JCM 8422 / Vc1).